The sequence spans 217 residues: Elongation factor Ts (217 aa).

The interval 82 to 85 (TDFV) is involved in Mg(2+) ion dislocation from EF-Tu.

The protein belongs to the EF-Ts family.

Its subcellular location is the cytoplasm. Its function is as follows. Associates with the EF-Tu.GDP complex and induces the exchange of GDP to GTP. It remains bound to the aminoacyl-tRNA.EF-Tu.GTP complex up to the GTP hydrolysis stage on the ribosome. The sequence is that of Elongation factor Ts from Desulforamulus reducens (strain ATCC BAA-1160 / DSM 100696 / MI-1) (Desulfotomaculum reducens).